Here is a 487-residue protein sequence, read N- to C-terminus: Ribulose bisphosphate carboxylase large chain (487 aa).

Residues Asn127 and Thr177 each coordinate substrate. Lys179 functions as the Proton acceptor in the catalytic mechanism. Lys181 is a binding site for substrate. Positions 205, 207, and 208 each coordinate Mg(2+). At Lys205 the chain carries N6-carboxylysine. The Proton acceptor role is filled by His297. Substrate contacts are provided by Arg298, His330, and Ser382.

It belongs to the RuBisCO large chain family. Type I subfamily. Heterohexadecamer of 8 large chains and 8 small chains. Mg(2+) is required as a cofactor.

The enzyme catalyses 2 (2R)-3-phosphoglycerate + 2 H(+) = D-ribulose 1,5-bisphosphate + CO2 + H2O. It carries out the reaction D-ribulose 1,5-bisphosphate + O2 = 2-phosphoglycolate + (2R)-3-phosphoglycerate + 2 H(+). RuBisCO catalyzes two reactions: the carboxylation of D-ribulose 1,5-bisphosphate, the primary event in carbon dioxide fixation, as well as the oxidative fragmentation of the pentose substrate. Both reactions occur simultaneously and in competition at the same active site. The polypeptide is Ribulose bisphosphate carboxylase large chain (Paracoccus denitrificans (strain Pd 1222)).